A 1252-amino-acid chain; its full sequence is LRR receptor-like serine/threonine-protein kinase GSO2 (1252 aa).

The first 22 residues, 1–22 (MQQNSVLLALFFLCFSSGLGSG), serve as a signal peptide directing secretion. The Extracellular portion of the chain corresponds to 23–876 (QPGQRDDLQT…QRSLSPKTVV (854 aa)). Residues Asn-62, Asn-77, and Asn-117 are each glycosylated (N-linked (GlcNAc...) asparagine). 10 LRR repeats span residues 94–118 (FNNL…LSNL), 120–143 (SSLE…LGSL), 144–166 (VNLK…TFGN), 168–190 (VNLQ…RFGR), 191–215 (LVQL…IGNC), 217–239 (SLAL…LNRL), 240–263 (KNLQ…LGDL), 265–286 (SIQY…RLTE), 287–310 (LANL…EFWR), and 312–335 (NQLE…ICSN). The N-linked (GlcNAc...) asparagine glycan is linked to Asn-157. Asn-214 and Asn-229 each carry an N-linked (GlcNAc...) asparagine glycan. A glycan (N-linked (GlcNAc...) asparagine) is linked at Asn-299. Asn-336 carries N-linked (GlcNAc...) asparagine glycosylation. LRR repeat units follow at residues 337-360 (TSLK…ISNC), 361-384 (QSLK…LFQL), 386-408 (ELTN…ISNL), 409-433 (TNLQ…GFLG), 435-456 (LEIM…IGNC), 457-480 (TRLQ…IGRL), 481-504 (KDLT…LGNC), 506-528 (QMTV…FGFL), 529-552 (TALE…LINL), 554-575 (NLTR…LCGS), 577-599 (SYLS…LGKS), 600-622 (TNLD…TFGK), 623-648 (ISEL…GLCK), 650-670 (LTHI…WLGK), 671-695 (LPLL…IFSL), 697-719 (NILT…IGNL), 720-743 (QALN…IGKL), 745-767 (KLFE…IGQL), 768-792 (QDLQ…ISTL), 793-816 (PKLE…IGDM), and 818-839 (SLGY…QFSR). N-linked (GlcNAc...) asparagine glycans are attached at residues Asn-370, Asn-394, and Asn-407. N-linked (GlcNAc...) asparagine glycosylation occurs at Asn-455. Asn-538, Asn-554, Asn-559, and Asn-566 each carry an N-linked (GlcNAc...) asparagine glycan. Asn-709 is a glycosylation site (N-linked (GlcNAc...) asparagine). Asn-780 is a glycosylation site (N-linked (GlcNAc...) asparagine). An N-linked (GlcNAc...) asparagine glycan is attached at Asn-823. The chain crosses the membrane as a helical span at residues 877 to 897 (IISAISSLAAIALMVLVIILF). Over 898–1252 (FKQNHDLFKK…YREMQTDTDK (355 aa)) the chain is Cytoplasmic. At Thr-945 the chain carries Phosphothreonine. Residues 948–1232 (LNEEFMIGSG…PSSRQASEYL (285 aa)) form the Protein kinase domain. ATP contacts are provided by residues 954–962 (IGSGGSGKV) and Lys-976. Tyr-1024 and Tyr-1066 each carry phosphotyrosine. Asp-1079 acts as the Proton acceptor in catalysis. A Phosphoserine modification is found at Ser-1114. Tyr-1124 and Tyr-1131 each carry phosphotyrosine.

It belongs to the protein kinase superfamily. Ser/Thr protein kinase family. As to quaternary structure, interacts with CIF1 and CIF2. As to expression, mostly expressed in siliques, seeds, developing embryos and seedlings, detected in flower buds, but not in roots, leaves or stems.

Its subcellular location is the cell membrane. It catalyses the reaction L-seryl-[protein] + ATP = O-phospho-L-seryl-[protein] + ADP + H(+). The catalysed reaction is L-threonyl-[protein] + ATP = O-phospho-L-threonyl-[protein] + ADP + H(+). In terms of biological role, together with GSO1, receptor-like serine/threonine-kinase required during the development of the epidermal surface in embryos and cotyledons. Involved in the nuclear division phase of megagametogenesis. In coordination with GSO2, regulates root growth through control of cell division and cell fate specification. Controls seedling root growth by modulating sucrose response after germination. Receptor of the peptide hormones CIF1 and CIF2 required for contiguous Casparian strip diffusion barrier formation in roots. The chain is LRR receptor-like serine/threonine-protein kinase GSO2 from Arabidopsis thaliana (Mouse-ear cress).